The chain runs to 232 residues: Alpha N-terminal protein methyltransferase 1 (232 aa).

Residues G71, R76, M123–Q124, and Q139 each bind S-adenosyl-L-methionine.

The protein belongs to the methyltransferase superfamily. NTM1 family.

The protein resides in the cytoplasm. The catalysed reaction is N-terminal L-alanyl-L-prolyl-L-lysyl-[protein] + 3 S-adenosyl-L-methionine = N-terminal N,N,N-trimethyl-L-alanyl-L-prolyl-L-lysyl-[protein] + 3 S-adenosyl-L-homocysteine + 3 H(+). It carries out the reaction N-terminal L-seryl-L-prolyl-L-lysyl-[protein] + 3 S-adenosyl-L-methionine = N-terminal N,N,N-trimethyl-L-seryl-L-prolyl-L-lysyl-[protein] + 3 S-adenosyl-L-homocysteine + 3 H(+). It catalyses the reaction N-terminal L-prolyl-L-prolyl-L-lysyl-[protein] + 2 S-adenosyl-L-methionine = N-terminal N,N-dimethyl-L-prolyl-L-prolyl-L-lysyl-[protein] + 2 S-adenosyl-L-homocysteine + 2 H(+). In terms of biological role, alpha-N-methyltransferase that methylates the N-terminus of target proteins containing the N-terminal motif [Ala/Pro/Ser]-Pro-Lys when the initiator Met is cleaved. Specifically catalyzes mono-, di- or tri-methylation of exposed alpha-amino group of Ala or Ser residue in the [Ala/Ser]-Pro-Lys motif and mono- or di-methylation of Pro in the Pro-Pro-Lys motif. Responsible for the N-terminal methylation of the ribosomal proteins RPL12A, RPL12B, RPS25A and RPS25B. The polypeptide is Alpha N-terminal protein methyltransferase 1 (TAE1) (Saccharomyces cerevisiae (strain ATCC 204508 / S288c) (Baker's yeast)).